A 79-amino-acid polypeptide reads, in one-letter code: Exodeoxyribonuclease 7 small subunit (79 aa).

The protein belongs to the XseB family. Heterooligomer composed of large and small subunits.

The protein resides in the cytoplasm. The catalysed reaction is Exonucleolytic cleavage in either 5'- to 3'- or 3'- to 5'-direction to yield nucleoside 5'-phosphates.. Its function is as follows. Bidirectionally degrades single-stranded DNA into large acid-insoluble oligonucleotides, which are then degraded further into small acid-soluble oligonucleotides. The chain is Exodeoxyribonuclease 7 small subunit from Lactococcus lactis subsp. cremoris (strain SK11).